We begin with the raw amino-acid sequence, 147 residues long: Hemoglobin subunit beta-2 (147 aa).

Valine 2 carries the N-acetylvaline modification. One can recognise a Globin domain in the interval 3-147; sequence HLTDAEKATV…VASALAHKYH (145 aa). Position 13 is a phosphoserine (serine 13). At lysine 18 the chain carries N6-succinyllysine. A phosphoserine mark is found at serine 51 and serine 53. Positions 64 and 93 each coordinate heme b. Asymmetric dimethylarginine is present on arginine 105. Threonine 124 carries the phosphothreonine modification. Cysteine 126 carries the phosphoserine; in variant Ser-126 modification.

It belongs to the globin family. As to quaternary structure, heterotetramer of two alpha chains and two beta chains. In terms of tissue distribution, red blood cells.

Functionally, involved in oxygen transport from the lung to the various peripheral tissues. This chain is Hemoglobin subunit beta-2, found in Rattus norvegicus (Rat).